A 143-amino-acid polypeptide reads, in one-letter code: Large ribosomal subunit protein bL17 (143 aa).

This sequence belongs to the bacterial ribosomal protein bL17 family. As to quaternary structure, part of the 50S ribosomal subunit. Contacts protein L32.

This Bartonella quintana (strain Toulouse) (Rochalimaea quintana) protein is Large ribosomal subunit protein bL17.